A 543-amino-acid polypeptide reads, in one-letter code: Chaperonin GroEL 1 (543 aa).

ATP contacts are provided by residues 29-32 (TLGP), K50, 86-90 (DGTTT), G414, and D493. Residues 524-543 (KEDKGAPAGMGGMPPGGGMY) form a disordered region. The segment covering 531–543 (AGMGGMPPGGGMY) has biased composition (gly residues).

It belongs to the chaperonin (HSP60) family. As to quaternary structure, forms a cylinder of 14 subunits composed of two heptameric rings stacked back-to-back. Interacts with the co-chaperonin GroES.

It is found in the cytoplasm. It carries out the reaction ATP + H2O + a folded polypeptide = ADP + phosphate + an unfolded polypeptide.. Together with its co-chaperonin GroES, plays an essential role in assisting protein folding. The GroEL-GroES system forms a nano-cage that allows encapsulation of the non-native substrate proteins and provides a physical environment optimized to promote and accelerate protein folding. The chain is Chaperonin GroEL 1 from Syntrophobacter fumaroxidans (strain DSM 10017 / MPOB).